A 202-amino-acid polypeptide reads, in one-letter code: MEENNNIYPIFDRMLTRQDKEELLKQRGVMIWFTGLSGSGKSTIAIALERELHKRGLLCRILDGDNIRTGINNNLGFSETDRVENIRRIAEVSKLFIDTGIITIAAFISPNNDIREMAARIVGPDDFLEIFVSTPLAECEKRDVKGLYAKARRGEIKNFTGISAPFEAPEHPALSLDTSVLSLEESVNRLLEIVLPRVSRHE.

Residue 35–42 (GLSGSGKS) coordinates ATP. The active-site Phosphoserine intermediate is the Ser-109.

This sequence belongs to the APS kinase family.

The enzyme catalyses adenosine 5'-phosphosulfate + ATP = 3'-phosphoadenylyl sulfate + ADP + H(+). It functions in the pathway sulfur metabolism; hydrogen sulfide biosynthesis; sulfite from sulfate: step 2/3. In terms of biological role, catalyzes the synthesis of activated sulfate. The protein is Adenylyl-sulfate kinase of Bacteroides fragilis (strain ATCC 25285 / DSM 2151 / CCUG 4856 / JCM 11019 / LMG 10263 / NCTC 9343 / Onslow / VPI 2553 / EN-2).